The sequence spans 238 residues: DNA repair protein RecO (238 aa).

It belongs to the RecO family.

In terms of biological role, involved in DNA repair and RecF pathway recombination. This chain is DNA repair protein RecO, found in Anaplasma marginale (strain Florida).